The chain runs to 525 residues: GMP synthase [glutamine-hydrolyzing] (525 aa).

The 199-residue stretch at 9-207 (RILILDFGSQ…VRDICQCEAL (199 aa)) folds into the Glutamine amidotransferase type-1 domain. Cys86 serves as the catalytic Nucleophile. Residues His181 and Glu183 contribute to the active site. The GMPS ATP-PPase domain maps to 208-400 (WTPAKIIDDA…LGLPYDMLYR (193 aa)). 235 to 241 (SGGVDSS) serves as a coordination point for ATP.

In terms of assembly, homodimer.

The catalysed reaction is XMP + L-glutamine + ATP + H2O = GMP + L-glutamate + AMP + diphosphate + 2 H(+). The protein operates within purine metabolism; GMP biosynthesis; GMP from XMP (L-Gln route): step 1/1. Functionally, catalyzes the synthesis of GMP from XMP. This is GMP synthase [glutamine-hydrolyzing] from Shigella boydii serotype 18 (strain CDC 3083-94 / BS512).